A 355-amino-acid chain; its full sequence is Protein RecA (355 aa).

Position 67 to 74 (67 to 74) interacts with ATP; that stretch reads GPESSGKT. Residues 331 to 355 are disordered; the sequence is NQDDKPDFTPAAHEVDEGSEAKENF.

The protein belongs to the RecA family.

Its subcellular location is the cytoplasm. Functionally, can catalyze the hydrolysis of ATP in the presence of single-stranded DNA, the ATP-dependent uptake of single-stranded DNA by duplex DNA, and the ATP-dependent hybridization of homologous single-stranded DNAs. It interacts with LexA causing its activation and leading to its autocatalytic cleavage. This chain is Protein RecA, found in Erwinia tasmaniensis (strain DSM 17950 / CFBP 7177 / CIP 109463 / NCPPB 4357 / Et1/99).